The sequence spans 183 residues: Gamma-crystallin N (183 aa).

Beta/gamma crystallin 'Greek key' domains follow at residues 6 to 46 (GKIT…RVES), 47 to 89 (GAWV…RPVG), 95 to 136 (FRID…KVYG), and 138 to 180 (GAWV…RRVL).

Belongs to the beta/gamma-crystallin family. As to quaternary structure, monomer. As to expression, primordially eye-specific. Present in lens nucleus. In the retina, expression in observed in the outer plexiform layer (containing photoreceptors axons and synapses) and photoreceptor outer segments (at protein level). Also detected in the auditory hindbrain where it is highly expressed in the medial nucleus of the trapezoid body, but also present in other nuclei of the superior olivary complex.

In terms of biological role, crystallins are the dominant structural components of the vertebrate eye lens. Also plays an important role for integrity and function of auditory nuclei. The sequence is that of Gamma-crystallin N from Mus musculus (Mouse).